The sequence spans 150 residues: Avidin-related protein 1 (150 aa).

A signal peptide spans 1–24 (MVHATSPLLLLLLLSLALVAPGLS). An Avidin-like domain is found at 26-147 (RKCSLTGKWD…GNNDFTRQRT (122 aa)). An intrachain disulfide couples C28 to C105. N36 and S40 together coordinate biotin. N54 carries an N-linked (GlcNAc...) asparagine glycan. Biotin contacts are provided by Y57, T59, and D63. Residues N67 and N93 are each glycosylated (N-linked (GlcNAc...) asparagine). Residues S95, S99, and N140 each coordinate biotin.

It belongs to the avidin/streptavidin family. As to quaternary structure, homotetramer. Glycosylated.

Its subcellular location is the secreted. Forms a strong non-covalent specific complex with biotin. The protein is Avidin-related protein 1 (AVR1) of Gallus gallus (Chicken).